A 153-amino-acid polypeptide reads, in one-letter code: uncharacterized protein (153 aa).

A disordered region spans residues 19 to 46 (EKSTRLEEDAMESEPLAGTKTRGRGRRR).

This is an uncharacterized protein from Homo sapiens (Human).